A 113-amino-acid polypeptide reads, in one-letter code: MKLPIPYQMAVSTVHLKLTDQSAKKDRYGRTIPSWEGDIAKCVVNMQTTYSGTNNDRQIVANGLVMMYAGYSDPIPALTKENLESKLTYKGQEYTVKSINRFDQPGHRRLILL.

The protein belongs to the Lactobacillus delbrueckii bacteriophages ORF5 protein family.

This is an uncharacterized protein from Lactobacillus delbrueckii (Lactococcus delbrueckii bacteriophage mv4).